We begin with the raw amino-acid sequence, 37 residues long: Omega-agatoxin-Aa3d (37 aa).

It belongs to the neurotoxin 04 (omega-agtx) family. 03 (type II/III omega-agtx) subfamily. Post-translationally, disulfide bonds are present. Expressed by the venom gland.

The protein resides in the secreted. Functionally, omega-agatoxins are antagonists of voltage-gated calcium channels. This toxin blocks calcium channels in insect central neurons but not at peripheral neuromuscular junctions. In vertebrates, it is broadly active against all high-threshold Cav1/CACNA1 channels and Cav2.2/CACNA1B channels. The protein is Omega-agatoxin-Aa3d of Agelenopsis aperta (North American funnel-web spider).